The primary structure comprises 466 residues: Asparagine--tRNA ligase (466 aa).

It belongs to the class-II aminoacyl-tRNA synthetase family. Homodimer.

The protein localises to the cytoplasm. The catalysed reaction is tRNA(Asn) + L-asparagine + ATP = L-asparaginyl-tRNA(Asn) + AMP + diphosphate + H(+). The protein is Asparagine--tRNA ligase of Klebsiella pneumoniae subsp. pneumoniae (strain ATCC 700721 / MGH 78578).